Reading from the N-terminus, the 116-residue chain is Probable non-functional immunoglobulin kappa variable 3-7 (116 aa).

An N-terminal signal peptide occupies residues 1-21; that stretch reads MEAPAQLLFLLLLWLPDTTRE. The tract at residues 21-43 is framework-1; it reads EIVMTQSPPTLSLSPGERVTLSC. One can recognise an Ig-like domain in the interval 22-116; it reads IVMTQSPPTL…YYCQQDYNLP (95 aa). Cys43 and Cys109 are joined by a disulfide. The tract at residues 44-55 is complementarity-determining-1; that stretch reads RASQSVSSSYLT. The framework-2 stretch occupies residues 56 to 70; that stretch reads WYQQKPGQAPRLLIY. Residues 71–77 form a complementarity-determining-2 region; sequence GASTRAT. A framework-3 region spans residues 78–109; it reads SIPARFSGSGSGTDFTLTISSLQPEDFAVYYC. The complementarity-determining-3 stretch occupies residues 110–116; the sequence is QQDYNLP.

Immunoglobulins are composed of two identical heavy chains and two identical light chains; disulfide-linked.

Its subcellular location is the secreted. The protein resides in the cell membrane. Its function is as follows. Probable non-functional open reading frame (ORF) of V region of the variable domain of immunoglobulin light chains. Non-functional ORF generally cannot participate in the synthesis of a productive immunoglobulin chain due to altered V-(D)-J or switch recombination and/or splicing site (at mRNA level) and/or conserved amino acid change (protein level). Immunoglobulins, also known as antibodies, are membrane-bound or secreted glycoproteins produced by B lymphocytes. In the recognition phase of humoral immunity, the membrane-bound immunoglobulins serve as receptors which, upon binding of a specific antigen, trigger the clonal expansion and differentiation of B lymphocytes into immunoglobulins-secreting plasma cells. Secreted immunoglobulins mediate the effector phase of humoral immunity, which results in the elimination of bound antigens. The antigen binding site is formed by the variable domain of one heavy chain, together with that of its associated light chain. Thus, each immunoglobulin has two antigen binding sites with remarkable affinity for a particular antigen. The variable domains are assembled by a process called V-(D)-J rearrangement and can then be subjected to somatic hypermutations which, after exposure to antigen and selection, allow affinity maturation for a particular antigen. This chain is Probable non-functional immunoglobulin kappa variable 3-7, found in Homo sapiens (Human).